A 171-amino-acid chain; its full sequence is NADH-quinone oxidoreductase subunit I (171 aa).

4Fe-4S ferredoxin-type domains follow at residues 63–92 (RRYE…IESD) and 102–131 (TRYD…ETQI). [4Fe-4S] cluster-binding residues include cysteine 72, cysteine 75, cysteine 78, cysteine 82, cysteine 111, cysteine 114, cysteine 117, and cysteine 121.

Belongs to the complex I 23 kDa subunit family. As to quaternary structure, NDH-1 is composed of 14 different subunits. Subunits NuoA, H, J, K, L, M, N constitute the membrane sector of the complex. It depends on [4Fe-4S] cluster as a cofactor.

The protein resides in the cell inner membrane. It carries out the reaction a quinone + NADH + 5 H(+)(in) = a quinol + NAD(+) + 4 H(+)(out). NDH-1 shuttles electrons from NADH, via FMN and iron-sulfur (Fe-S) centers, to quinones in the respiratory chain. The immediate electron acceptor for the enzyme in this species is believed to be ubiquinone. Couples the redox reaction to proton translocation (for every two electrons transferred, four hydrogen ions are translocated across the cytoplasmic membrane), and thus conserves the redox energy in a proton gradient. This is NADH-quinone oxidoreductase subunit I from Paracidovorax citrulli (strain AAC00-1) (Acidovorax citrulli).